A 352-amino-acid chain; its full sequence is Zinc finger protein 185 (352 aa).

Disordered stretches follow at residues 1 to 73 and 86 to 121; these read MTTE…ELQS and DVLP…ITPP. Ser18 carries the phosphoserine modification. Residues 61–72 show a composition bias toward polar residues; sequence KKTTSSPTQELQ. Thr137 carries the phosphothreonine modification. Over residues 251 to 268 the composition is skewed to polar residues; it reads VSSGKPVSSHCDSPSSIE. The tract at residues 251–287 is disordered; it reads VSSGKPVSSHCDSPSSIEDSLDLAKKPPHEGTPSERP. Basic and acidic residues predominate over residues 272 to 287; the sequence is DLAKKPPHEGTPSERP. Positions 292-347 constitute an LIM zinc-binding domain; that stretch reads CTYCSHEIQDCPKITLEHLGICCHEYCFKCGICNKPMGDLLDQIFIHRDTIHCGKC.

As to expression, expressed in skin, kidney, ovary, testis. Also expressed in brain, cartilage, heart, lung, spleen and thymus.

It is found in the cytoplasm. The protein localises to the cytoskeleton. Its subcellular location is the cell junction. It localises to the focal adhesion. May be involved in the regulation of cellular proliferation and/or differentiation. This Mus musculus (Mouse) protein is Zinc finger protein 185 (Znf185).